The primary structure comprises 259 residues: Tryptophan synthase alpha chain (259 aa).

Catalysis depends on proton acceptor residues Glu35 and Asp46.

It belongs to the TrpA family. Tetramer of two alpha and two beta chains.

It carries out the reaction (1S,2R)-1-C-(indol-3-yl)glycerol 3-phosphate + L-serine = D-glyceraldehyde 3-phosphate + L-tryptophan + H2O. It participates in amino-acid biosynthesis; L-tryptophan biosynthesis; L-tryptophan from chorismate: step 5/5. Functionally, the alpha subunit is responsible for the aldol cleavage of indoleglycerol phosphate to indole and glyceraldehyde 3-phosphate. This is Tryptophan synthase alpha chain from Methanococcus maripaludis (strain C5 / ATCC BAA-1333).